A 790-amino-acid polypeptide reads, in one-letter code: Valine--tRNA ligase (790 aa).

The 'HIGH' region motif lies at P40 to H50. A 'KMSKS' region motif is present at residues K521–S525. ATP is bound at residue K524.

This sequence belongs to the class-I aminoacyl-tRNA synthetase family. ValS type 2 subfamily.

The protein resides in the cytoplasm. It catalyses the reaction tRNA(Val) + L-valine + ATP = L-valyl-tRNA(Val) + AMP + diphosphate. In terms of biological role, catalyzes the attachment of valine to tRNA(Val). As ValRS can inadvertently accommodate and process structurally similar amino acids such as threonine, to avoid such errors, it has a 'posttransfer' editing activity that hydrolyzes mischarged Thr-tRNA(Val) in a tRNA-dependent manner. The polypeptide is Valine--tRNA ligase (Thermoplasma volcanium (strain ATCC 51530 / DSM 4299 / JCM 9571 / NBRC 15438 / GSS1)).